The primary structure comprises 181 residues: Inner membrane-spanning protein YciB (181 aa).

The next 5 membrane-spanning stretches (helical) occupy residues 10–30, 50–70, 80–100, 120–140, and 148–168; these read LIIF…GALI, MQLI…ALHD, IVYV…KPAI, WAWV…AYHL, and FKVF…GGYI.

It belongs to the YciB family.

It localises to the cell inner membrane. In terms of biological role, plays a role in cell envelope biogenesis, maintenance of cell envelope integrity and membrane homeostasis. The protein is Inner membrane-spanning protein YciB of Vibrio cholerae serotype O1 (strain ATCC 39315 / El Tor Inaba N16961).